The chain runs to 101 residues: Small ribosomal subunit protein uS14 (101 aa).

Residues Ser-50 to Pro-70 form a disordered region. The span at Arg-59–Gly-68 shows a compositional bias: basic residues.

The protein belongs to the universal ribosomal protein uS14 family. As to quaternary structure, part of the 30S ribosomal subunit. Contacts proteins S3 and S10.

Its function is as follows. Binds 16S rRNA, required for the assembly of 30S particles and may also be responsible for determining the conformation of the 16S rRNA at the A site. The sequence is that of Small ribosomal subunit protein uS14 from Erwinia tasmaniensis (strain DSM 17950 / CFBP 7177 / CIP 109463 / NCPPB 4357 / Et1/99).